The sequence spans 379 residues: Homoserine O-acetyltransferase (379 aa).

Residues 1-24 are disordered; the sequence is MSHDTTPPLPATGAWREGDPPGDR. In terms of domain architecture, AB hydrolase-1 spans 60 to 365; sequence NAVLVLHALT…ASGHDGFLTE (306 aa). Residue Ser165 is the Nucleophile of the active site. Arg236 is a substrate binding site. Active-site residues include Asp329 and His359. Asp360 provides a ligand contact to substrate.

Belongs to the AB hydrolase superfamily. MetX family. In terms of assembly, homodimer.

It localises to the cytoplasm. It carries out the reaction L-homoserine + acetyl-CoA = O-acetyl-L-homoserine + CoA. It functions in the pathway amino-acid biosynthesis; L-methionine biosynthesis via de novo pathway; O-acetyl-L-homoserine from L-homoserine: step 1/1. Functionally, transfers an acetyl group from acetyl-CoA to L-homoserine, forming acetyl-L-homoserine. This chain is Homoserine O-acetyltransferase, found in Thermobifida fusca (strain YX).